The primary structure comprises 243 residues: Ice-binding protein K1-A (243 aa).

Residues 1–20 form the signal peptide; sequence MFSSTYLLAIIALAVSSVFA.

The protein belongs to the ice-binding protein family.

It is found in the secreted. Functionally, binds to the surface of ice crystals. Inhibits growth of the ice crystals. Has antifreeze activity for survival under snow cover. Has high thermal hysteresis (TH) activity, which is the ability to lower the freezing point of an aqueous solution below its melting point, and thus the freezing of the cell fluid can be prevented protecting the organism from ice damage. The TH activity of this protein is 2.0 degrees Celsius at 0.11 mM. This is Ice-binding protein K1-A from Typhula ishikariensis (Gray snow mold fungus).